A 419-amino-acid polypeptide reads, in one-letter code: MEMIQAVRGTRDILPQEVRLWQQVEASAREILGRANYQEIRTPILELTELFARSIGSATDVVGKEMYSFSTRGEQEVSLRPENTAGVVRAYIQHGLQVAGDVQRLWYCGPMFRYERPQAGRQRQFHQLGVELLGSRDPRADAEVIALAWDLLRAVGAENLTLRLNSLGDPQDRRAYRQALVDYLTPLKEELDLDSQERLVRNPLRILDSKDPHTRTIAEQGPKLPDYLSADSRAFFEQVQAHLQALDIPYELDPYLVRGLDYYTHTAFEIVSPELGSQSTVCGGGRYDGLVEELGGPPTPAVGWAIGLERLVLLLQKKQQEIPPTSVEVYVISRGAKAEAQSLQIAQALRQAGFCTELDLSGSAFSKQFKRASRSGATWAVALGDAEAAAGEVQLKHLPTGQQQTLLQADLVKYLVSQR.

The protein belongs to the class-II aminoacyl-tRNA synthetase family. In terms of assembly, homodimer.

The protein localises to the cytoplasm. It carries out the reaction tRNA(His) + L-histidine + ATP = L-histidyl-tRNA(His) + AMP + diphosphate + H(+). This Synechococcus sp. (strain JA-3-3Ab) (Cyanobacteria bacterium Yellowstone A-Prime) protein is Histidine--tRNA ligase.